The following is a 162-amino-acid chain: NADH-quinone oxidoreductase subunit I (162 aa).

2 4Fe-4S ferredoxin-type domains span residues 52 to 82 (LRRY…IEAG) and 93 to 122 (VRYD…EGPN). [4Fe-4S] cluster contacts are provided by Cys-62, Cys-65, Cys-68, Cys-72, Cys-102, Cys-105, Cys-108, and Cys-112.

Belongs to the complex I 23 kDa subunit family. In terms of assembly, NDH-1 is composed of 14 different subunits. Subunits NuoA, H, J, K, L, M, N constitute the membrane sector of the complex. The cofactor is [4Fe-4S] cluster.

The protein resides in the cell inner membrane. The enzyme catalyses a quinone + NADH + 5 H(+)(in) = a quinol + NAD(+) + 4 H(+)(out). In terms of biological role, NDH-1 shuttles electrons from NADH, via FMN and iron-sulfur (Fe-S) centers, to quinones in the respiratory chain. The immediate electron acceptor for the enzyme in this species is believed to be ubiquinone. Couples the redox reaction to proton translocation (for every two electrons transferred, four hydrogen ions are translocated across the cytoplasmic membrane), and thus conserves the redox energy in a proton gradient. The polypeptide is NADH-quinone oxidoreductase subunit I (Nitrobacter hamburgensis (strain DSM 10229 / NCIMB 13809 / X14)).